The following is a 155-amino-acid chain: Endoribonuclease YbeY (155 aa).

Positions 120, 124, and 130 each coordinate Zn(2+).

It belongs to the endoribonuclease YbeY family. It depends on Zn(2+) as a cofactor.

It is found in the cytoplasm. Its function is as follows. Single strand-specific metallo-endoribonuclease involved in late-stage 70S ribosome quality control and in maturation of the 3' terminus of the 16S rRNA. The polypeptide is Endoribonuclease YbeY (Staphylococcus aureus (strain MSSA476)).